The following is a 364-amino-acid chain: Aminomethyltransferase (364 aa).

Belongs to the GcvT family. The glycine cleavage system is composed of four proteins: P, T, L and H.

It carries out the reaction N(6)-[(R)-S(8)-aminomethyldihydrolipoyl]-L-lysyl-[protein] + (6S)-5,6,7,8-tetrahydrofolate = N(6)-[(R)-dihydrolipoyl]-L-lysyl-[protein] + (6R)-5,10-methylene-5,6,7,8-tetrahydrofolate + NH4(+). In terms of biological role, the glycine cleavage system catalyzes the degradation of glycine. This chain is Aminomethyltransferase, found in Salmonella arizonae (strain ATCC BAA-731 / CDC346-86 / RSK2980).